The primary structure comprises 362 residues: sn-glycerol-3-phosphate import ATP-binding protein UgpC (362 aa).

The ABC transporter domain occupies 4-235 (LTLQSVKKTY…PATVFVASFI (232 aa)). Residue 37–44 (GPSGCGKS) participates in ATP binding.

The protein belongs to the ABC transporter superfamily. sn-glycerol-3-phosphate importer (TC 3.A.1.1.3) family. As to quaternary structure, the complex is composed of two ATP-binding proteins (UgpC), two transmembrane proteins (UgpA and UgpE) and a solute-binding protein (UgpB).

The protein localises to the cell inner membrane. The enzyme catalyses sn-glycerol 3-phosphate(out) + ATP + H2O = sn-glycerol 3-phosphate(in) + ADP + phosphate + H(+). Functionally, part of the ABC transporter complex UgpBAEC involved in sn-glycerol-3-phosphate (G3P) import. Responsible for energy coupling to the transport system. This is sn-glycerol-3-phosphate import ATP-binding protein UgpC from Paraburkholderia xenovorans (strain LB400).